A 406-amino-acid polypeptide reads, in one-letter code: LIM/homeobox protein Lhx1 (406 aa).

2 consecutive LIM zinc-binding domains span residues 4–54 (CAGC…CKND) and 63–117 (CAGC…CKED). Disordered stretches follow at residues 128–189 (NSLH…TIKA) and 293–374 (YDFF…EVFG). Low complexity predominate over residues 137 to 148 (SDPSLSPDSQDP). Residues 151–167 (DDAKDSESANVSDKEGG) show a composition bias toward basic and acidic residues. Position 162 is a phosphoserine (Ser-162). Residues 180-239 (RRGPRTTIKAKQLETLKAAFAATPKPTRHIREQLAQETGLNMRVIQVWFQNRRSKERRMK) constitute a DNA-binding region (homeobox). Over residues 315-327 (PSSGPSGTPLGGL) the composition is skewed to low complexity. Positions 352–362 (GDSPSPEPSLP) are enriched in pro residues.

Interacts with LDB1 via the tandem LIM domains.

Its subcellular location is the nucleus. Its function is as follows. Potential transcription factor. May play a role in early mesoderm formation and later in lateral mesoderm differentiation and neurogenesis. This is LIM/homeobox protein Lhx1 (LHX1) from Saimiri boliviensis boliviensis (Bolivian squirrel monkey).